The primary structure comprises 557 residues: uncharacterized protein (557 aa).

A signal peptide spans 1-30; it reads MAPRRRRHTRIAGLRVVGTATLVAATTLTA. Residue Cys31 is the site of N-palmitoyl cysteine attachment. Cys31 carries S-diacylglycerol cysteine lipidation.

It to M.bovis Mb2616c and M.leprae ML0489.

The protein localises to the cell membrane. This is an uncharacterized protein from Mycobacterium tuberculosis (strain ATCC 25618 / H37Rv).